Reading from the N-terminus, the 328-residue chain is Malate dehydrogenase 1 (328 aa).

An NAD(+)-binding site is contributed by 12-18; that stretch reads GAAGQIG. 2 residues coordinate substrate: Arg-95 and Arg-101. Residues Asn-108, Gln-115, and 132–134 each bind NAD(+); that span reads VGN. The substrate site is built by Asn-134 and Arg-165. The active-site Proton acceptor is the His-190.

It belongs to the LDH/MDH superfamily. MDH type 2 family.

The catalysed reaction is (S)-malate + NAD(+) = oxaloacetate + NADH + H(+). In terms of biological role, catalyzes the reversible oxidation of malate to oxaloacetate. The protein is Malate dehydrogenase 1 of Albidiferax ferrireducens (strain ATCC BAA-621 / DSM 15236 / T118) (Rhodoferax ferrireducens).